A 424-amino-acid chain; its full sequence is Protein FAM43A (424 aa).

The span at Gln261 to Ala297 shows a compositional bias: acidic residues. Disordered regions lie at residues Gln261 to Ala299 and Leu382 to Gly424. The span at Leu382 to Ile394 shows a compositional bias: low complexity. Polar residues predominate over residues Ser405 to Leu418.

This sequence belongs to the FAM43 family.

The polypeptide is Protein FAM43A (Fam43a) (Mus musculus (Mouse)).